The chain runs to 317 residues: DNA-directed RNA polymerase subunit alpha (317 aa).

The tract at residues 1-230 (MIEIEMEKPK…EHLNLFITLT (230 aa)) is alpha N-terminal domain (alpha-NTD). The alpha C-terminal domain (alpha-CTD) stretch occupies residues 247–317 (KEKVLEMTIE…LGLGLRPSDE (71 aa)).

It belongs to the RNA polymerase alpha chain family. In terms of assembly, homodimer. The RNAP catalytic core consists of 2 alpha, 1 beta, 1 beta' and 1 omega subunit. When a sigma factor is associated with the core the holoenzyme is formed, which can initiate transcription.

It carries out the reaction RNA(n) + a ribonucleoside 5'-triphosphate = RNA(n+1) + diphosphate. Functionally, DNA-dependent RNA polymerase catalyzes the transcription of DNA into RNA using the four ribonucleoside triphosphates as substrates. This Alkaliphilus oremlandii (strain OhILAs) (Clostridium oremlandii (strain OhILAs)) protein is DNA-directed RNA polymerase subunit alpha.